The primary structure comprises 217 residues: Somatotropin (217 aa).

The N-terminal stretch at 1–26 (MMAAGPRTSLLLAFALLCLPWTQVVG) is a signal peptide. His-46 serves as a coordination point for Zn(2+). Residues Cys-79 and Cys-190 are joined by a disulfide bond. Residue Ser-132 is modified to Phosphoserine. Glu-199 contributes to the Zn(2+) binding site. A disulfide bridge links Cys-207 with Cys-215.

Belongs to the somatotropin/prolactin family.

Its subcellular location is the secreted. Plays an important role in growth control. Its major role in stimulating body growth is to stimulate the liver and other tissues to secrete IGF1. It stimulates both the differentiation and proliferation of myoblasts. It also stimulates amino acid uptake and protein synthesis in muscle and other tissues. The chain is Somatotropin (GH1) from Bos taurus (Bovine).